The chain runs to 404 residues: Propionate kinase (404 aa).

This sequence belongs to the acetokinase family. PduW subfamily.

It localises to the cytoplasm. It carries out the reaction propanoate + ATP = propanoyl phosphate + ADP. The protein operates within polyol metabolism; 1,2-propanediol degradation. Works with phosphate acetyltransferase (pta) to capture exogenous propionate and regenerate propionyl-CoA during degradation of 1,2-propanediol (1,2-PD). In Klebsiella pneumoniae subsp. pneumoniae (strain ATCC 700721 / MGH 78578), this protein is Propionate kinase.